The primary structure comprises 176 residues: Small ribosomal subunit protein uS4 (176 aa).

An S4 RNA-binding domain is found at 103–165; it reads RRLQTIVYKK…PTSPYAKRRL (63 aa).

Belongs to the universal ribosomal protein uS4 family. As to quaternary structure, part of the 30S ribosomal subunit. Contacts protein S5. The interaction surface between S4 and S5 is involved in control of translational fidelity.

One of the primary rRNA binding proteins, it binds directly to 16S rRNA where it nucleates assembly of the body of the 30S subunit. In terms of biological role, with S5 and S12 plays an important role in translational accuracy. This Hyperthermus butylicus (strain DSM 5456 / JCM 9403 / PLM1-5) protein is Small ribosomal subunit protein uS4.